The following is a 218-amino-acid chain: Imidazole glycerol phosphate synthase subunit HisH (218 aa).

In terms of domain architecture, Glutamine amidotransferase type-1 spans 12-218; sequence SIVVVDYGLG…RNFVDYCADQ (207 aa). The Nucleophile role is filled by C88. Catalysis depends on residues H196 and E198.

In terms of assembly, heterodimer of HisH and HisF.

The protein localises to the cytoplasm. The enzyme catalyses 5-[(5-phospho-1-deoxy-D-ribulos-1-ylimino)methylamino]-1-(5-phospho-beta-D-ribosyl)imidazole-4-carboxamide + L-glutamine = D-erythro-1-(imidazol-4-yl)glycerol 3-phosphate + 5-amino-1-(5-phospho-beta-D-ribosyl)imidazole-4-carboxamide + L-glutamate + H(+). It catalyses the reaction L-glutamine + H2O = L-glutamate + NH4(+). It functions in the pathway amino-acid biosynthesis; L-histidine biosynthesis; L-histidine from 5-phospho-alpha-D-ribose 1-diphosphate: step 5/9. Functionally, IGPS catalyzes the conversion of PRFAR and glutamine to IGP, AICAR and glutamate. The HisH subunit catalyzes the hydrolysis of glutamine to glutamate and ammonia as part of the synthesis of IGP and AICAR. The resulting ammonia molecule is channeled to the active site of HisF. This chain is Imidazole glycerol phosphate synthase subunit HisH, found in Halobacterium salinarum (strain ATCC 700922 / JCM 11081 / NRC-1) (Halobacterium halobium).